The sequence spans 32 residues: Glutathione S-transferase 8.2 (32 aa).

Residue 21–22 (QS) participates in glutathione binding.

It belongs to the GST superfamily. Alpha family. Homodimer. The N-terminus is blocked.

Its subcellular location is the cytoplasm. It carries out the reaction RX + glutathione = an S-substituted glutathione + a halide anion + H(+). Conjugation of reduced glutathione to a wide number of exogenous and endogenous hydrophobic electrophiles. In Dicentrarchus labrax (European seabass), this protein is Glutathione S-transferase 8.2.